The primary structure comprises 560 residues: Trans-activating transcriptional regulatory protein (560 aa).

Disordered stretches follow at residues 1–25 (MPKN…LFNN) and 99–134 (TGAE…LVNK).

The protein belongs to the nucleopolyhedrovirus IE-1 protein family.

Its function is as follows. Regulatory transcriptional protein, which trans-activates gene expression from early baculovirus promoters. Can also trans-activate its own promoter, suggesting that it is autoregulated during normal infection of insect cells. The sequence is that of Trans-activating transcriptional regulatory protein (IE1) from Orgyia pseudotsugata (Douglas-fir tussock moth).